The following is a 294-amino-acid chain: MSHPSTAPAHPSRLALYARLVRIDKPIGTLLLLWPTLWAMWMAAGGPPGWTLFWIFFAGTFLMRSAGCAMNDWADRDFDKHVKRTKERPLTAGLIASWEALAVAAVLALIALALILPLNALTKWLAVVAAVLAGTYPFFKRFFAIPQAYLGIAFGFGIPMAFAAIQDQVPFVAWLMLLANVFWAIAYDTAYAMVDRDDDLLLGMKTSAITFGRFDVAAIMICYAVFLGLMAWAGSLLGLGWPYYAGLVAAAGMAGYHYTLIRERDRMKCFAAFRHNNWLGACVFAGTFVAYLLK.

The next 7 helical transmembrane spans lie at 37–57 (LWAM…WIFF), 101–121 (LAVA…LNAL), 142–162 (FFAI…PMAF), 169–189 (VPFV…AYDT), 219–239 (IMIC…LLGL), 241–261 (WPYY…YTLI), and 271–293 (AAFR…AYLL).

It belongs to the UbiA prenyltransferase family. The cofactor is Mg(2+).

Its subcellular location is the cell inner membrane. It carries out the reaction all-trans-octaprenyl diphosphate + 4-hydroxybenzoate = 4-hydroxy-3-(all-trans-octaprenyl)benzoate + diphosphate. It functions in the pathway cofactor biosynthesis; ubiquinone biosynthesis. Functionally, catalyzes the prenylation of para-hydroxybenzoate (PHB) with an all-trans polyprenyl group. Mediates the second step in the final reaction sequence of ubiquinone-8 (UQ-8) biosynthesis, which is the condensation of the polyisoprenoid side chain with PHB, generating the first membrane-bound Q intermediate 3-octaprenyl-4-hydroxybenzoate. The chain is 4-hydroxybenzoate octaprenyltransferase from Cupriavidus metallidurans (strain ATCC 43123 / DSM 2839 / NBRC 102507 / CH34) (Ralstonia metallidurans).